Here is a 128-residue protein sequence, read N- to C-terminus: Large ribosomal subunit protein bL20c (128 aa).

It belongs to the bacterial ribosomal protein bL20 family. Component of the chloroplast large ribosomal subunit (LSU). Mature 70S chloroplast ribosomes of higher plants consist of a small (30S) and a large (50S) subunit. The 30S small subunit contains 1 molecule of ribosomal RNA (16S rRNA) and 24 different proteins. The 50S large subunit contains 3 rRNA molecules (23S, 5S and 4.5S rRNA) and 33 different proteins.

It is found in the plastid. It localises to the chloroplast. Functionally, component of the chloroplast ribosome (chloro-ribosome), a dedicated translation machinery responsible for the synthesis of chloroplast genome-encoded proteins, including proteins of the transcription and translation machinery and components of the photosynthetic apparatus. This is Large ribosomal subunit protein bL20c (rpl20) from Spinacia oleracea (Spinach).